We begin with the raw amino-acid sequence, 412 residues long: Acetate kinase (412 aa).

Asn10 provides a ligand contact to Mg(2+). Lys17 contacts ATP. The tract at residues 40–61 is disordered; that stretch reads ETSRLAHTPSAGGGAEPRERTG. Arg95 serves as a coordination point for substrate. Asp152 functions as the Proton donor/acceptor in the catalytic mechanism. ATP-binding positions include 212–216, 286–288, and 334–338; these read HLGNG, DMR, and GVGEN. Residue Glu388 coordinates Mg(2+).

Belongs to the acetokinase family. In terms of assembly, homodimer. Requires Mg(2+) as cofactor. Mn(2+) serves as cofactor.

It localises to the cytoplasm. The enzyme catalyses acetate + ATP = acetyl phosphate + ADP. It functions in the pathway metabolic intermediate biosynthesis; acetyl-CoA biosynthesis; acetyl-CoA from acetate: step 1/2. Catalyzes the formation of acetyl phosphate from acetate and ATP. Can also catalyze the reverse reaction. In Streptomyces griseus subsp. griseus (strain JCM 4626 / CBS 651.72 / NBRC 13350 / KCC S-0626 / ISP 5235), this protein is Acetate kinase.